The following is a 486-amino-acid chain: Palmitoyltransferase pfa4 (486 aa).

Residues 1-15 lie on the Cytoplasmic side of the membrane; sequence MTNLQTGPTTRGLQR. The helical transmembrane segment at 16 to 36 threads the bilayer; that stretch reads FAIPAVCGLIIFLGYYSQYLF. Residues 37 to 51 are Lumenal-facing; it reads NTSADLAPGPLTCRE. A helical membrane pass occupies residues 52 to 72; the sequence is SLIFNILLVCLWLTYYQACTV. Over 73–146 the chain is Cytoplasmic; the sequence is DPGQYKFPPK…NCVSLQTFPH (74 aa). Residues 81 to 91 show a composition bias toward basic and acidic residues; the sequence is PKEKEDGDNNN. Residues 81–101 are disordered; it reads PKEKEDGDNNNKRGGRGPQKA. Residues 102-152 enclose the DHHC domain; the sequence is KWCKKCDAPKPPRAHHCRHCARCIPRMDHHCPWTGNCVSLQTFPHFLRFLV. Catalysis depends on C132, which acts as the S-palmitoyl cysteine intermediate. Residues 147–166 traverse the membrane as a helical segment; it reads FLRFLVYTNAALVYFARLLW. Residues 167–178 lie on the Lumenal side of the membrane; the sequence is TRLYYGLWDQRH. The helical transmembrane segment at 179–201 threads the bilayer; the sequence is VPAYLGPSVGALLGCTMLSIAWF. At 202 to 486 the chain is on the cytoplasmic side; it reads ATQFALMVLL…RKVKSNGVHE (285 aa). The segment at 314 to 420 is disordered; that stretch reads NDRVGMWPPP…QDGRAWMNSE (107 aa). 2 stretches are compositionally biased toward basic and acidic residues: residues 324-333 and 346-376; these read DPEKLRRERA and LNTE…DLRR. Residues 386–399 show a composition bias toward acidic residues; that stretch reads EEDEIMAELEEDEG.

It belongs to the DHHC palmitoyltransferase family. PFA4 subfamily.

The protein resides in the endoplasmic reticulum membrane. It catalyses the reaction L-cysteinyl-[protein] + hexadecanoyl-CoA = S-hexadecanoyl-L-cysteinyl-[protein] + CoA. Functionally, mediates the reversible addition of palmitate to target proteins, thereby regulating their membrane association and biological function. The sequence is that of Palmitoyltransferase pfa4 from Neurospora crassa (strain ATCC 24698 / 74-OR23-1A / CBS 708.71 / DSM 1257 / FGSC 987).